A 448-amino-acid chain; its full sequence is MRYLPLTPEDRVEMLGAIGVKSIDDLFVDVPVSARRDAPVDLPHHAGELDVEREMAGLARRNRAAGEGPFFCGAGAYRHHVPATVDHIIQRSEFLTSYTPYQPEIAQGTLQVLFEFQTQVAALTGMEVANASLYDGSTGAAEAVMMAQRVTRRNKAVMSGGVHPHYVGAIETLAHAAGVATQALPAAVDAEDAVIAAIDQDTACVVVQTPNVFGTVTDVSKIAEAAHAAGALLIVVTTEAVSFGLLKSPGEMGADIAVAEGQSIGNGLNFGGPYVGLFACKEKFVRQMPGRLCGETVDADGKRGFVLTLSTREQHIRRDKATSNICTNSGLCALAFSIHMSLLGETGLRQLAAVNHQKALALRDALKAVPGVEILTPRFFNEFAIRVPGKAAEVVEILAAHGVIAGVPFSRLDAKAGLDDVLLVAATETTLDIDIPVFAKALTKVFAQ.

It belongs to the GcvP family. N-terminal subunit subfamily. As to quaternary structure, the glycine cleavage system is composed of four proteins: P, T, L and H. In this organism, the P 'protein' is a heterodimer of two subunits.

It carries out the reaction N(6)-[(R)-lipoyl]-L-lysyl-[glycine-cleavage complex H protein] + glycine + H(+) = N(6)-[(R)-S(8)-aminomethyldihydrolipoyl]-L-lysyl-[glycine-cleavage complex H protein] + CO2. In terms of biological role, the glycine cleavage system catalyzes the degradation of glycine. The P protein binds the alpha-amino group of glycine through its pyridoxal phosphate cofactor; CO(2) is released and the remaining methylamine moiety is then transferred to the lipoamide cofactor of the H protein. This chain is Probable glycine dehydrogenase (decarboxylating) subunit 1, found in Caulobacter vibrioides (strain ATCC 19089 / CIP 103742 / CB 15) (Caulobacter crescentus).